Reading from the N-terminus, the 128-residue chain is Glycine cleavage system H protein (128 aa).

The 83-residue stretch at Thr-25–Lys-107 folds into the Lipoyl-binding domain. N6-lipoyllysine is present on Lys-66.

The protein belongs to the GcvH family. As to quaternary structure, the glycine cleavage system is composed of four proteins: P, T, L and H. The cofactor is (R)-lipoate.

The glycine cleavage system catalyzes the degradation of glycine. The H protein shuttles the methylamine group of glycine from the P protein to the T protein. The protein is Glycine cleavage system H protein of Neisseria meningitidis serogroup B (strain ATCC BAA-335 / MC58).